We begin with the raw amino-acid sequence, 99 residues long: NADH-quinone oxidoreductase subunit K (99 aa).

The next 3 membrane-spanning stretches (helical) occupy residues 2–22 (PVEY…LGVL), 28–48 (LILM…FLAF), and 60–80 (IAFF…AVVI).

Belongs to the complex I subunit 4L family. In terms of assembly, NDH-1 is composed of 14 different subunits. Subunits NuoA, H, J, K, L, M, N constitute the membrane sector of the complex.

Its subcellular location is the cell inner membrane. The enzyme catalyses a quinone + NADH + 5 H(+)(in) = a quinol + NAD(+) + 4 H(+)(out). NDH-1 shuttles electrons from NADH, via FMN and iron-sulfur (Fe-S) centers, to quinones in the respiratory chain. The immediate electron acceptor for the enzyme in this species is believed to be ubiquinone. Couples the redox reaction to proton translocation (for every two electrons transferred, four hydrogen ions are translocated across the cytoplasmic membrane), and thus conserves the redox energy in a proton gradient. This Anaeromyxobacter dehalogenans (strain 2CP-C) protein is NADH-quinone oxidoreductase subunit K.